The following is a 907-amino-acid chain: Eukaryotic translation initiation factor 4 gamma 2 (907 aa).

The residue at position 1 (methionine 1) is an N-acetylmethionine. Positions 1 to 71 (MESAIAEGGA…SAANNSANEK (71 aa)) are disordered. Residue serine 11 is modified to Phosphoserine. In terms of domain architecture, MIF4G spans 78 to 308 (FRKVRGILNK…QDTVELREHH (231 aa)). Threonine 89 carries the phosphothreonine modification. Arginine 360 bears the Omega-N-methylarginine mark. Serine 395 carries the post-translational modification Phosphoserine. Lysine 431 is modified (N6-methyllysine). Residue serine 443 is modified to Phosphoserine. The disordered stretch occupies residues 498–541 (PPSAQPPRTQTPPLGQTPQLGLKTNPPLIQEKPAKTSKKPPPSK). Over residues 503–516 (PPRTQTPPLGQTPQ) the composition is skewed to polar residues. Position 505 is an omega-N-methylarginine (arginine 505). Phosphothreonine is present on residues threonine 508 and threonine 514. An MI domain is found at 543 to 666 (ELLKLTETVV…SISELAQPLE (124 aa)). Lysine 575 is covalently cross-linked (Glycyl lysine isopeptide (Lys-Gly) (interchain with G-Cter in SUMO2)). The region spanning 720–904 (EGKGLSFLFP…ETAEEEESEE (185 aa)) is the W2 domain. Serine 902 carries the phosphoserine modification.

Belongs to the eukaryotic initiation factor 4G family. Interacts with the serine/threonine protein kinases MKNK1 and MKNK2. Binds EIF4A and EIF3. Interacts with MIF4GD. Interacts with DAZAP2. Phosphorylation; hyperphosphorylated during mitosis.

Appears to play a role in the switch from cap-dependent to IRES-mediated translation during mitosis, apoptosis and viral infection. Cleaved by some caspases and viral proteases. The sequence is that of Eukaryotic translation initiation factor 4 gamma 2 from Oryctolagus cuniculus (Rabbit).